We begin with the raw amino-acid sequence, 90 residues long: MLAKLFGLGKKQQSASLAKERLQIIVAHQRNELHPRSSKISSHLLAELKDEIIEVVKKYVALSEDNIRDIDIKVEDSSKNSTIEVNIPFN.

It belongs to the MinE family.

Functionally, prevents the cell division inhibition by proteins MinC and MinD at internal division sites while permitting inhibition at polar sites. This ensures cell division at the proper site by restricting the formation of a division septum at the midpoint of the long axis of the cell. This chain is Cell division topological specificity factor, found in Francisella philomiragia subsp. philomiragia (strain ATCC 25017 / CCUG 19701 / FSC 153 / O#319-036).